Consider the following 141-residue polypeptide: Large ribosomal subunit protein uL11 (141 aa).

It belongs to the universal ribosomal protein uL11 family. In terms of assembly, part of the ribosomal stalk of the 50S ribosomal subunit. Interacts with L10 and the large rRNA to form the base of the stalk. L10 forms an elongated spine to which L12 dimers bind in a sequential fashion forming a multimeric L10(L12)X complex. In terms of processing, one or more lysine residues are methylated.

Forms part of the ribosomal stalk which helps the ribosome interact with GTP-bound translation factors. The polypeptide is Large ribosomal subunit protein uL11 (Synechococcus elongatus (strain ATCC 33912 / PCC 7942 / FACHB-805) (Anacystis nidulans R2)).